Reading from the N-terminus, the 93-residue chain is Small ribosomal subunit protein uS19 (93 aa).

It belongs to the universal ribosomal protein uS19 family.

Its function is as follows. Protein S19 forms a complex with S13 that binds strongly to the 16S ribosomal RNA. This chain is Small ribosomal subunit protein uS19, found in Geobacter sulfurreducens (strain ATCC 51573 / DSM 12127 / PCA).